Reading from the N-terminus, the 110-residue chain is DNA-binding protein Pars_1791 (110 aa).

Belongs to the PDCD5 family.

In Pyrobaculum arsenaticum (strain DSM 13514 / JCM 11321 / PZ6), this protein is DNA-binding protein Pars_1791.